The primary structure comprises 879 residues: Leucine--tRNA ligase (879 aa).

The 'HIGH' region motif lies at 45–55; sequence PYPSGALHMGH. The 'KMSKS' region motif lies at 637–641; the sequence is KMSKS. Lys-640 is a binding site for ATP.

It belongs to the class-I aminoacyl-tRNA synthetase family.

The protein resides in the cytoplasm. It carries out the reaction tRNA(Leu) + L-leucine + ATP = L-leucyl-tRNA(Leu) + AMP + diphosphate. This is Leucine--tRNA ligase from Xylella fastidiosa (strain M23).